Here is a 233-residue protein sequence, read N- to C-terminus: 5'-methylthioadenosine/S-adenosylhomocysteine nucleosidase (233 aa).

Glu-12 serves as the catalytic Proton acceptor. Substrate contacts are provided by residues Gly-78, Ile-156, and 177 to 178 (ME). Asp-201 functions as the Proton donor in the catalytic mechanism.

The protein belongs to the PNP/UDP phosphorylase family. MtnN subfamily.

It catalyses the reaction S-adenosyl-L-homocysteine + H2O = S-(5-deoxy-D-ribos-5-yl)-L-homocysteine + adenine. The enzyme catalyses S-methyl-5'-thioadenosine + H2O = 5-(methylsulfanyl)-D-ribose + adenine. The catalysed reaction is 5'-deoxyadenosine + H2O = 5-deoxy-D-ribose + adenine. Its pathway is amino-acid biosynthesis; L-methionine biosynthesis via salvage pathway; S-methyl-5-thio-alpha-D-ribose 1-phosphate from S-methyl-5'-thioadenosine (hydrolase route): step 1/2. Its function is as follows. Catalyzes the irreversible cleavage of the glycosidic bond in both 5'-methylthioadenosine (MTA) and S-adenosylhomocysteine (SAH/AdoHcy) to adenine and the corresponding thioribose, 5'-methylthioribose and S-ribosylhomocysteine, respectively. Also cleaves 5'-deoxyadenosine, a toxic by-product of radical S-adenosylmethionine (SAM) enzymes, into 5-deoxyribose and adenine. The chain is 5'-methylthioadenosine/S-adenosylhomocysteine nucleosidase from Listeria innocua serovar 6a (strain ATCC BAA-680 / CLIP 11262).